The chain runs to 62 residues: Phospholipase A2 superbin a (62 aa).

3 residues coordinate Ca(2+): Tyr28, Gly30, and Gly32. Cysteines 29 and 45 form a disulfide. His48 is an active-site residue. Asp49 provides a ligand contact to Ca(2+).

Ca(2+) is required as a cofactor. In terms of tissue distribution, expressed by the venom gland.

It is found in the secreted. The enzyme catalyses a 1,2-diacyl-sn-glycero-3-phosphocholine + H2O = a 1-acyl-sn-glycero-3-phosphocholine + a fatty acid + H(+). Its function is as follows. Snake venom phospholipase A2 (PLA2) that inhibits collagen-induced platelet aggregation. In terms of inhibition of platelet aggregation, superbin a is more potent as superbin b, c, and d. PLA2 catalyzes the calcium-dependent hydrolysis of the 2-acyl groups in 3-sn-phosphoglycerides. The sequence is that of Phospholipase A2 superbin a from Austrelaps superbus (Lowland copperhead snake).